Here is a 179-residue protein sequence, read N- to C-terminus: Sec-independent protein translocase protein TatB (179 aa).

A helical membrane pass occupies residues 1–21 (MFDLGFWEVLIIMLIGLLILG). 2 stretches are compositionally biased toward basic and acidic residues: residues 75-86 (KDVEKNARRFEA) and 94-106 (TFRD…DDAA). Residues 75-179 (KDVEKNARRF…QGGGGEEKRQ (105 aa)) form a disordered region.

It belongs to the TatB family. The Tat system comprises two distinct complexes: a TatABC complex, containing multiple copies of TatA, TatB and TatC subunits, and a separate TatA complex, containing only TatA subunits. Substrates initially bind to the TatABC complex, which probably triggers association of the separate TatA complex to form the active translocon.

The protein resides in the cell inner membrane. Part of the twin-arginine translocation (Tat) system that transports large folded proteins containing a characteristic twin-arginine motif in their signal peptide across membranes. Together with TatC, TatB is part of a receptor directly interacting with Tat signal peptides. TatB may form an oligomeric binding site that transiently accommodates folded Tat precursor proteins before their translocation. This chain is Sec-independent protein translocase protein TatB, found in Alkalilimnicola ehrlichii (strain ATCC BAA-1101 / DSM 17681 / MLHE-1).